An 887-amino-acid chain; its full sequence is Golgin IMH1 (887 aa).

4 disordered regions span residues 16 to 50 (LAKGINEDTASEGQHGAGAQGGRREEGGSPYEELP), 142 to 214 (QESL…MKSQ), 240 to 301 (GASQ…SAGD), and 783 to 822 (LKMSKDMSSQSRHSSRSGSLVSPSSDNETGNSPRKISISS). 2 stretches are compositionally biased toward basic and acidic residues: residues 37–50 (GRREEGGSPYEELP) and 145–210 (LEQR…HAAE). A coiled-coil region spans residues 118-241 (AMLTEEIKRI…YKSTIQELGA (124 aa)). Polar residues predominate over residues 240 to 254 (GASQATGEAQPSSEA). Residues 258–273 (RGKKGKGKRGKGKKRV) show a composition bias toward basic residues. Residues 299-788 (AGDEIIEAIE…LSTQLKMSKD (490 aa)) adopt a coiled-coil conformation. Over residues 788–807 (DMSSQSRHSSRSGSLVSPSS) the composition is skewed to low complexity. Residues 808–822 (DNETGNSPRKISISS) show a composition bias toward polar residues. The GRIP domain maps to 837-885 (EMESNEKLAYIRNVLLGFLEHREQRSQLLPVVSTLLQLSSHDEKRLLTS).

Its subcellular location is the cytoplasm. It localises to the golgi apparatus membrane. Involved in vesicular transport between an endosomal compartment and the Golgi apparatus. In Eremothecium gossypii (strain ATCC 10895 / CBS 109.51 / FGSC 9923 / NRRL Y-1056) (Yeast), this protein is Golgin IMH1 (IMH1).